The following is a 420-amino-acid chain: Argininosuccinate synthase (420 aa).

11 to 19 (AFSGGLDTT) lines the ATP pocket. Y88 contributes to the L-citrulline binding site. G118 contributes to the ATP binding site. L-aspartate contacts are provided by T120, N124, and D125. N124 contributes to the L-citrulline binding site. L-citrulline is bound by residues R128, S174, S183, E257, and Y269. The disordered stretch occupies residues 401-420 (KGAAVTDGSGDHAASEDTEE). A compositionally biased stretch (basic and acidic residues) spans 409–420 (SGDHAASEDTEE).

It belongs to the argininosuccinate synthase family. Type 1 subfamily. Homotetramer.

It localises to the cytoplasm. The enzyme catalyses L-citrulline + L-aspartate + ATP = 2-(N(omega)-L-arginino)succinate + AMP + diphosphate + H(+). The protein operates within amino-acid biosynthesis; L-arginine biosynthesis; L-arginine from L-ornithine and carbamoyl phosphate: step 2/3. This is Argininosuccinate synthase from Haloarcula marismortui (strain ATCC 43049 / DSM 3752 / JCM 8966 / VKM B-1809) (Halobacterium marismortui).